The primary structure comprises 327 residues: Aspartate--ammonia ligase (327 aa).

This sequence belongs to the class-II aminoacyl-tRNA synthetase family. AsnA subfamily.

The protein resides in the cytoplasm. It catalyses the reaction L-aspartate + NH4(+) + ATP = L-asparagine + AMP + diphosphate + H(+). It functions in the pathway amino-acid biosynthesis; L-asparagine biosynthesis; L-asparagine from L-aspartate (ammonia route): step 1/1. This Bacillus cereus (strain AH187) protein is Aspartate--ammonia ligase.